Consider the following 403-residue polypeptide: Ubiquitin-like modifier-activating enzyme 5 (403 aa).

Residues Gly-81, Asp-102, Lys-125, Asn-148, and Asn-182 each coordinate ATP. The Zn(2+) site is built by Cys-224 and Cys-227. The active-site Glycyl thioester intermediate is the Cys-248. Zn(2+) is bound by residues Cys-301 and Cys-306. A UFM1-interacting sequence (UIS) motif is present at residues 333–345; it reads VVHEDNEWGIELV. The tract at residues 346–376 is linker; the sequence is SEVSEEELKNSSGPVPTLPEGITVAYTVPKK. Phosphoserine is present on residues Ser-357 and Ser-392. The short motif at 388–403 is the UFC1-binding sequence (UFC) element; that stretch reads DSGESLEDLMARMKNM.

Belongs to the ubiquitin-activating E1 family. UBA5 subfamily. Homodimer; homodimerization is required for UFM1 activation. Interacts (via UIS motif) with UFM1; binds UFM1 via a trans-binding mechanism in which UFM1 interacts with distinct sites in both subunits of the UBA5 homodimer. Interacts (via C-terminus) with UFC1. Interacts (via UIS motif) with GABARAPL2 and, with lower affinity, with GABARAP and GABARAPL1.

Its subcellular location is the cytoplasm. The protein resides in the nucleus. It is found in the endoplasmic reticulum membrane. It localises to the golgi apparatus. In terms of biological role, E1-like enzyme which specifically catalyzes the first step in ufmylation. Activates UFM1 by first adenylating its C-terminal glycine residue with ATP, and thereafter linking this residue to the side chain of a cysteine residue in E1, yielding a UFM1-E1 thioester and free AMP. Activates UFM1 via a trans-binding mechanism, in which UFM1 interacts with distinct sites in both subunits of the UBA5 homodimer. Trans-binding also promotes stabilization of the UBA5 homodimer, and enhances ATP-binding. Transfer of UFM1 from UBA5 to the E2-like enzyme UFC1 also takes place using a trans mechanism. Ufmylation plays a key role in various processes, such as ribosome recycling, response to DNA damage, interferon response or reticulophagy (also called ER-phagy). Ufmylation is essential for erythroid differentiation of both megakaryocytes and erythrocytes. In Mus musculus (Mouse), this protein is Ubiquitin-like modifier-activating enzyme 5.